The primary structure comprises 932 residues: Protein translocase subunit SecA (932 aa).

Residues glutamine 83, 101 to 105 (GEGKT), and aspartate 491 contribute to the ATP site.

It belongs to the SecA family. As to quaternary structure, monomer and homodimer. Part of the essential Sec protein translocation apparatus which comprises SecA, SecYEG and auxiliary proteins SecDF. Other proteins may also be involved.

It localises to the cell inner membrane. The protein localises to the cellular thylakoid membrane. The protein resides in the cytoplasm. The catalysed reaction is ATP + H2O + cellular proteinSide 1 = ADP + phosphate + cellular proteinSide 2.. Part of the Sec protein translocase complex. Interacts with the SecYEG preprotein conducting channel. Has a central role in coupling the hydrolysis of ATP to the transfer of proteins into and across the cell membrane, serving as an ATP-driven molecular motor driving the stepwise translocation of polypeptide chains across the membrane. In terms of biological role, probably participates in protein translocation into and across both the cytoplasmic and thylakoid membranes in cyanobacterial cells. The protein is Protein translocase subunit SecA of Cyanothece sp. (strain PCC 7425 / ATCC 29141).